We begin with the raw amino-acid sequence, 273 residues long: MDQKFAVFGNPIGHSKSPRIHALFAEQTGIEHCYGMVLAPNETFEETLTSFFAGGAIGANITTPFKERAHAKCDELTDRASLAGAVNTIKQLKDGRLLGDNTDGIGLLSDLERQHLIQTTDHILLVGAGGAARGVILPLLSYGCKVVITNRTYARAQQLAEVFHHLGDIDAVEMQDLSGQPFDLIINATASGIHGEVPNLPMDIISPQTRCYDMFYQADSTPFLAWSTRLGVTSYADGLGMLVGQAAHAFQLWHGVMPEITPVLNQLRDELAK.

Residues 15-17 and T62 contribute to the shikimate site; that span reads SKS. Residue K66 is the Proton acceptor of the active site. D78 provides a ligand contact to NADP(+). 2 residues coordinate shikimate: N87 and D103. NADP(+)-binding positions include 127–131, 150–155, and M214; these read GAGGA and NRTYAR. Shikimate is bound at residue Y216. G238 lines the NADP(+) pocket.

Belongs to the shikimate dehydrogenase family. In terms of assembly, homodimer.

The catalysed reaction is shikimate + NADP(+) = 3-dehydroshikimate + NADPH + H(+). Its pathway is metabolic intermediate biosynthesis; chorismate biosynthesis; chorismate from D-erythrose 4-phosphate and phosphoenolpyruvate: step 4/7. In terms of biological role, involved in the biosynthesis of the chorismate, which leads to the biosynthesis of aromatic amino acids. Catalyzes the reversible NADPH linked reduction of 3-dehydroshikimate (DHSA) to yield shikimate (SA). This chain is Shikimate dehydrogenase (NADP(+)), found in Yersinia enterocolitica serotype O:8 / biotype 1B (strain NCTC 13174 / 8081).